We begin with the raw amino-acid sequence, 515 residues long: Cytochrome P450 1A1 (515 aa).

Phenylalanine 225 serves as a coordination point for substrate. A heme-binding site is contributed by cysteine 459.

This sequence belongs to the cytochrome P450 family. Heme is required as a cofactor.

The protein resides in the endoplasmic reticulum membrane. Its subcellular location is the microsome membrane. It carries out the reaction an organic molecule + reduced [NADPH--hemoprotein reductase] + O2 = an alcohol + oxidized [NADPH--hemoprotein reductase] + H2O + H(+). Functionally, cytochromes P450 are a group of heme-thiolate monooxygenases. They oxidize a variety of structurally unrelated compounds, including steroids, fatty acids, and xenobiotics. The chain is Cytochrome P450 1A1 (cyp1a1) from Microgadus tomcod (Atlantic tomcod).